The sequence spans 111 residues: Ribosome-binding factor A (111 aa).

Belongs to the RbfA family. As to quaternary structure, monomer. Binds 30S ribosomal subunits, but not 50S ribosomal subunits or 70S ribosomes.

The protein localises to the cytoplasm. In terms of biological role, one of several proteins that assist in the late maturation steps of the functional core of the 30S ribosomal subunit. Associates with free 30S ribosomal subunits (but not with 30S subunits that are part of 70S ribosomes or polysomes). Required for efficient processing of 16S rRNA. May interact with the 5'-terminal helix region of 16S rRNA. The protein is Ribosome-binding factor A of Helicobacter pylori (strain ATCC 700392 / 26695) (Campylobacter pylori).